A 324-amino-acid polypeptide reads, in one-letter code: Methionyl-tRNA formyltransferase (324 aa).

114-117 contacts (6S)-5,6,7,8-tetrahydrofolate; it reads SLLP.

Belongs to the Fmt family.

The catalysed reaction is L-methionyl-tRNA(fMet) + (6R)-10-formyltetrahydrofolate = N-formyl-L-methionyl-tRNA(fMet) + (6S)-5,6,7,8-tetrahydrofolate + H(+). Its function is as follows. Attaches a formyl group to the free amino group of methionyl-tRNA(fMet). The formyl group appears to play a dual role in the initiator identity of N-formylmethionyl-tRNA by promoting its recognition by IF2 and preventing the misappropriation of this tRNA by the elongation apparatus. The protein is Methionyl-tRNA formyltransferase of Azobacteroides pseudotrichonymphae genomovar. CFP2.